Reading from the N-terminus, the 364-residue chain is Alanine racemase (364 aa).

Lys35 serves as the catalytic Proton acceptor; specific for D-alanine. Residue Lys35 is modified to N6-(pyridoxal phosphate)lysine. Arg136 provides a ligand contact to substrate. The active-site Proton acceptor; specific for L-alanine is Tyr261. Met309 contributes to the substrate binding site.

Belongs to the alanine racemase family. Pyridoxal 5'-phosphate serves as cofactor.

It carries out the reaction L-alanine = D-alanine. Its pathway is amino-acid biosynthesis; D-alanine biosynthesis; D-alanine from L-alanine: step 1/1. Its function is as follows. Catalyzes the interconversion of L-alanine and D-alanine. May also act on other amino acids. This chain is Alanine racemase (alr), found in Shewanella amazonensis (strain ATCC BAA-1098 / SB2B).